The following is a 503-amino-acid chain: MTAVADRSLGPELARTETLGPDTDVLVIGLTSSENGPSIAPDDMFGDVLTEDVRAELLDQLGAVGAKGKAEELTRVPAPAALEGVTSVLAVGLGAPDKLDAEQLRRSAGVAARSLTGTEVVATTLGGIDIAAAAEGFYLGAYTFTPFRSAKSAPKPDERPVAKVEFLVPTADFGEEALFRAQLVAEAVATARDFVNTPPSHLYPAEFAARTQVLAEAAGLDVEVLDENALEAGGYGGVLGVGKGSSRPPRLVRLTYAGGPKKVALIGKGVTFDTGGISIKPAQNMENMTSDMAGAAAVIATTLLAARLSLPITVTATVPMAENMPSATAQRPGDVLTQYGGTTVEVLNTDAEGRLILADAIVRAGEDSPEFLIDVATLTGAQMVALGTRTPGVMGTDEFRDRVARISQEVGENGWPMPLPAELRADLNSKIADLANVAPHRWGGMLSAGLFLREFVPEGVQWAHLDVAGPAYNTGGPFGYIGKGGTGVPVRTLIAVLEDIAAE.

K268 and D273 together coordinate Mn(2+). K280 is a catalytic residue. Residues D291, D350, and E352 each coordinate Mn(2+). R354 is an active-site residue.

It belongs to the peptidase M17 family. Mn(2+) serves as cofactor.

Its subcellular location is the cytoplasm. It carries out the reaction Release of an N-terminal amino acid, Xaa-|-Yaa-, in which Xaa is preferably Leu, but may be other amino acids including Pro although not Arg or Lys, and Yaa may be Pro. Amino acid amides and methyl esters are also readily hydrolyzed, but rates on arylamides are exceedingly low.. The catalysed reaction is Release of an N-terminal amino acid, preferentially leucine, but not glutamic or aspartic acids.. Presumably involved in the processing and regular turnover of intracellular proteins. Catalyzes the removal of unsubstituted N-terminal amino acids from various peptides. This is Probable cytosol aminopeptidase from Nocardia farcinica (strain IFM 10152).